The chain runs to 407 residues: Methylthioribose-1-phosphate isomerase (407 aa).

The active-site Proton donor is the D275.

Belongs to the eIF-2B alpha/beta/delta subunits family. MtnA subfamily.

It is found in the cytoplasm. It localises to the nucleus. It carries out the reaction 5-(methylsulfanyl)-alpha-D-ribose 1-phosphate = 5-(methylsulfanyl)-D-ribulose 1-phosphate. It participates in amino-acid biosynthesis; L-methionine biosynthesis via salvage pathway; L-methionine from S-methyl-5-thio-alpha-D-ribose 1-phosphate: step 1/6. In terms of biological role, catalyzes the interconversion of methylthioribose-1-phosphate (MTR-1-P) into methylthioribulose-1-phosphate (MTRu-1-P). This Kluyveromyces lactis (strain ATCC 8585 / CBS 2359 / DSM 70799 / NBRC 1267 / NRRL Y-1140 / WM37) (Yeast) protein is Methylthioribose-1-phosphate isomerase.